A 356-amino-acid chain; its full sequence is MAKRVAGSKRYVHPLPIEPVVLPPLIAHNPLSWVYWVLAYVTSSNQLPRKIPLEVGADGRYTVTGREQMQYLWEHGFFGTGQLSRSEPTWQARTVDRLQLDTEGIAGHKLEQVTQLRRKQRLEFKRERASFERKRLELRRQGVLESEILEQERLWLKQLRDRELQWEASTGDPSPVRAEDAEIIAEDGASVLPIEKLELMPVEALFLTLALPVLHADAPAILARTLGPQPALPQIERLCRLYAAYHHYRSHGWCVRSGIKFGCDFLLYRRGPPFHHAEFSVMVLAPDERHDYTWYSTVARVVGGAQKTLVLAYVARRAAADQLAALWHARRYMEAFALFEVHELVYRRWLPGKNRE.

Active-site residues include Tyr-268, His-276, and Lys-307.

It belongs to the tRNA-intron endonuclease family. As to quaternary structure, heterotetramer composed of SEN2, SEN15, SEN34 and SEN54. Interacts directly with SEN54.

The enzyme catalyses pretRNA = a 3'-half-tRNA molecule with a 5'-OH end + a 5'-half-tRNA molecule with a 2',3'-cyclic phosphate end + an intron with a 2',3'-cyclic phosphate and a 5'-hydroxyl terminus.. Constitutes one of the two catalytic subunit of the tRNA-splicing endonuclease complex, a complex responsible for identification and cleavage of the splice sites in pre-tRNA. It cleaves pre-tRNA at the 5'- and 3'-splice sites to release the intron. The products are an intron and two tRNA half-molecules bearing 2',3'-cyclic phosphate and 5'-OH termini. There are no conserved sequences at the splice sites, but the intron is invariably located at the same site in the gene, placing the splice sites an invariant distance from the constant structural features of the tRNA body. This subunit may anchor the endonuclease complex to the nuclear membrane. Probably carries the active site for 5'-splice site cleavage. The polypeptide is tRNA-splicing endonuclease subunit SEN2 (SEN2) (Eremothecium gossypii (strain ATCC 10895 / CBS 109.51 / FGSC 9923 / NRRL Y-1056) (Yeast)).